The chain runs to 204 residues: Small ribosomal subunit protein uS4 (204 aa).

Residues 94–157 (RRLDNVVYRL…KKLEVFKENL (64 aa)) enclose the S4 RNA-binding domain.

This sequence belongs to the universal ribosomal protein uS4 family. As to quaternary structure, part of the 30S ribosomal subunit. Contacts protein S5. The interaction surface between S4 and S5 is involved in control of translational fidelity.

In terms of biological role, one of the primary rRNA binding proteins, it binds directly to 16S rRNA where it nucleates assembly of the body of the 30S subunit. Its function is as follows. With S5 and S12 plays an important role in translational accuracy. The polypeptide is Small ribosomal subunit protein uS4 (Sulfurihydrogenibium sp. (strain YO3AOP1)).